Consider the following 20-residue polypeptide: Ferric reductase A (20 aa).

In terms of assembly, monomer.

The enzyme catalyses 2 a Fe(II)-siderophore + NAD(+) + H(+) = 2 a Fe(III)-siderophore + NADH. Functionally, reductase activity that acts on Fe(3+)-chelates and NADH as an electron donor and requires the presence of FMN for full activity. May play a role in iron uptake. The sequence is that of Ferric reductase A (ferA) from Paracoccus denitrificans.